The primary structure comprises 444 residues: Homogentisate 1,2-dioxygenase (444 aa).

The disordered stretch occupies residues 92 to 111 (GDSADVPPTPPNQLRWDPLP). The active-site Proton acceptor is H298. The Fe cation site is built by H341 and E347. Residues Y356 and H377 each coordinate homogentisate. Fe cation is bound at residue H377.

The protein belongs to the homogentisate dioxygenase family. As to quaternary structure, hexamer; dimer of trimers. The cofactor is Fe cation.

It carries out the reaction homogentisate + O2 = 4-maleylacetoacetate + H(+). The protein operates within amino-acid degradation; L-phenylalanine degradation; acetoacetate and fumarate from L-phenylalanine: step 4/6. Involved in the catabolism of homogentisate (2,5-dihydroxyphenylacetate or 2,5-OH-PhAc), a central intermediate in the degradation of phenylalanine and tyrosine. Catalyzes the oxidative ring cleavage of the aromatic ring of homogentisate to yield maleylacetoacetate. The protein is Homogentisate 1,2-dioxygenase of Burkholderia vietnamiensis (strain G4 / LMG 22486) (Burkholderia cepacia (strain R1808)).